Reading from the N-terminus, the 374-residue chain is Ferroptosis suppressor protein 1 (374 aa).

G2 carries the N-myristoyl glycine lipid modification. The chain crosses the membrane as a helical span at residues 13 to 35 (VVIVGGGFAGIAAATQLKSFGIP). Residues 17–21 (GGGFA), R53, and V81 contribute to the 6-hydroxy-FAD site. K167 carries the N6-acetyllysine modification. D285 is a 6-hydroxy-FAD binding site.

Belongs to the FAD-dependent oxidoreductase family. Requires 6-hydroxy-FAD as cofactor. In terms of processing, N-myristoylation at Gly-2 mediates the recruitment to lipid droplets and plasma membrane. Acetylation at Lys-167 prevents AIFM2 ubiquitination and degradation, thereby inhibiting ferroptosis. KAT2B mediates acetylation at Lys-167, while HDAC3 removes it. Post-translationally, ubiquitinated. AIFM2 undergoes 'Lys-29'-ubiquitination and proteasomal degradation, which is inhibited by acetylation at Lys-167.

It localises to the lipid droplet. Its subcellular location is the cell membrane. It is found in the cytoplasm. The protein localises to the mitochondrion membrane. The protein resides in the nucleus. It catalyses the reaction ubiquinone-10 + NADH + H(+) = ubiquinol-10 + NAD(+). The catalysed reaction is phylloquinone + NADH + H(+) = phylloquinol + NAD(+). It carries out the reaction menaquinone-4 + NADH + H(+) = menaquinol-4 + NAD(+). The enzyme catalyses menadione + NADH + H(+) = menadiol + NAD(+). Its activity is regulated as follows. The modification by 4-hydroxy-2-nonenal (HNE) adduction in mitochondria results in loss of the oxidoreductase activity and activation of a novel function in mitochondrial oxidative stress signaling. Its function is as follows. An NAD(P)H-dependent oxidoreductase that acts as a key inhibitor of ferroptosis. At the plasma membrane, catalyzes reduction of coenzyme Q/ubiquinone-10 to ubiquinol-10, a lipophilic radical-trapping antioxidant that prevents lipid oxidative damage and consequently ferroptosis. Acts in parallel to GPX4 to suppress phospholipid peroxidation and ferroptosis. This anti-ferroptotic function is independent of cellular glutathione levels. Also acts as a potent radical-trapping antioxidant by mediating warfarin-resistant vitamin K reduction in the canonical vitamin K cycle: catalyzes NAD(P)H-dependent reduction of vitamin K (phylloquinone, menaquinone-4 and menadione) to hydroquinone forms. Hydroquinones act as potent radical-trapping antioxidants inhibitor of phospholipid peroxidation and ferroptosis. May play a role in mitochondrial stress signaling. Upon oxidative stress, associates with the lipid peroxidation end product 4-hydroxy-2-nonenal (HNE) forming a lipid adduct devoid of oxidoreductase activity, which then translocates from mitochondria into the nucleus triggering DNA damage and cell death. This chain is Ferroptosis suppressor protein 1 (aifm2), found in Xenopus tropicalis (Western clawed frog).